Reading from the N-terminus, the 132-residue chain is Protein NrdI (132 aa).

The protein belongs to the NrdI family.

In terms of biological role, probably involved in ribonucleotide reductase function. This Staphylococcus haemolyticus (strain JCSC1435) protein is Protein NrdI.